The following is a 198-amino-acid chain: Recombination protein RecR (198 aa).

The C4-type zinc-finger motif lies at 57–72; sequence CEKCNTFTEAQICEVC. The Toprim domain maps to 80–175; sequence TLLCVVETPA…AVTRLARGVP (96 aa).

It belongs to the RecR family.

Functionally, may play a role in DNA repair. It seems to be involved in an RecBC-independent recombinational process of DNA repair. It may act with RecF and RecO. In Paraburkholderia phytofirmans (strain DSM 17436 / LMG 22146 / PsJN) (Burkholderia phytofirmans), this protein is Recombination protein RecR.